The sequence spans 192 residues: 7-methyl-GTP pyrophosphatase (192 aa).

Residue Asp-69 is the Proton acceptor of the active site.

This sequence belongs to the Maf family. YceF subfamily. It depends on a divalent metal cation as a cofactor.

The protein localises to the cytoplasm. The enzyme catalyses N(7)-methyl-GTP + H2O = N(7)-methyl-GMP + diphosphate + H(+). Functionally, nucleoside triphosphate pyrophosphatase that hydrolyzes 7-methyl-GTP (m(7)GTP). May have a dual role in cell division arrest and in preventing the incorporation of modified nucleotides into cellular nucleic acids. This chain is 7-methyl-GTP pyrophosphatase, found in Pseudomonas aeruginosa (strain ATCC 15692 / DSM 22644 / CIP 104116 / JCM 14847 / LMG 12228 / 1C / PRS 101 / PAO1).